We begin with the raw amino-acid sequence, 194 residues long: Imidazoleglycerol-phosphate dehydratase (194 aa).

It belongs to the imidazoleglycerol-phosphate dehydratase family.

The protein localises to the cytoplasm. It carries out the reaction D-erythro-1-(imidazol-4-yl)glycerol 3-phosphate = 3-(imidazol-4-yl)-2-oxopropyl phosphate + H2O. Its pathway is amino-acid biosynthesis; L-histidine biosynthesis; L-histidine from 5-phospho-alpha-D-ribose 1-diphosphate: step 6/9. The sequence is that of Imidazoleglycerol-phosphate dehydratase from Bacillus cereus (strain ATCC 14579 / DSM 31 / CCUG 7414 / JCM 2152 / NBRC 15305 / NCIMB 9373 / NCTC 2599 / NRRL B-3711).